The following is a 378-amino-acid chain: L-asparaginase-like protein GF11609 (378 aa).

Residues 1–21 form the signal peptide; that stretch reads MCSPLPLLILRLLLLTHPSLG. 3 disulfide bridges follow: Cys-71–Cys-76, Cys-170–Cys-186, and Cys-325–Cys-352.

This sequence belongs to the Ntn-hydrolase family.

In Drosophila ananassae (Fruit fly), this protein is L-asparaginase-like protein GF11609.